A 185-amino-acid chain; its full sequence is Ribosome-recycling factor (185 aa).

The protein belongs to the RRF family.

The protein localises to the cytoplasm. In terms of biological role, responsible for the release of ribosomes from messenger RNA at the termination of protein biosynthesis. May increase the efficiency of translation by recycling ribosomes from one round of translation to another. This is Ribosome-recycling factor from Halorhodospira halophila (strain DSM 244 / SL1) (Ectothiorhodospira halophila (strain DSM 244 / SL1)).